Here is a 200-residue protein sequence, read N- to C-terminus: Dephospho-CoA kinase (200 aa).

The 198-residue stretch at 3–200 (KVGLTGGIGS…EELQRRLHSR (198 aa)) folds into the DPCK domain. An ATP-binding site is contributed by 11–16 (GSGKSS).

Belongs to the CoaE family.

It localises to the cytoplasm. The catalysed reaction is 3'-dephospho-CoA + ATP = ADP + CoA + H(+). It functions in the pathway cofactor biosynthesis; coenzyme A biosynthesis; CoA from (R)-pantothenate: step 5/5. Its function is as follows. Catalyzes the phosphorylation of the 3'-hydroxyl group of dephosphocoenzyme A to form coenzyme A. The chain is Dephospho-CoA kinase from Thermobifida fusca (strain YX).